Reading from the N-terminus, the 372-residue chain is Carbamoyl phosphate synthase small chain (372 aa).

Positions 1–184 are CPSase; sequence MKAYIYLEND…SFQKFNDAKR (184 aa). L-glutamine contacts are provided by S45, G240, and G242. The 185-residue stretch at 188–372 folds into the Glutamine amidotransferase type-1 domain; sequence KVAVIDYGVK…YIFKEFMNLM (185 aa). The Nucleophile role is filled by C268. Residues L269, Q272, N310, and Y313 each contribute to the L-glutamine site. Catalysis depends on residues H351 and E353.

It belongs to the CarA family. As to quaternary structure, composed of two chains; the small (or glutamine) chain promotes the hydrolysis of glutamine to ammonia, which is used by the large (or ammonia) chain to synthesize carbamoyl phosphate. Tetramer of heterodimers (alpha,beta)4.

The enzyme catalyses hydrogencarbonate + L-glutamine + 2 ATP + H2O = carbamoyl phosphate + L-glutamate + 2 ADP + phosphate + 2 H(+). The catalysed reaction is L-glutamine + H2O = L-glutamate + NH4(+). Its pathway is amino-acid biosynthesis; L-arginine biosynthesis; carbamoyl phosphate from bicarbonate: step 1/1. It functions in the pathway pyrimidine metabolism; UMP biosynthesis via de novo pathway; (S)-dihydroorotate from bicarbonate: step 1/3. Its function is as follows. Small subunit of the glutamine-dependent carbamoyl phosphate synthetase (CPSase). CPSase catalyzes the formation of carbamoyl phosphate from the ammonia moiety of glutamine, carbonate, and phosphate donated by ATP, constituting the first step of 2 biosynthetic pathways, one leading to arginine and/or urea and the other to pyrimidine nucleotides. The small subunit (glutamine amidotransferase) binds and cleaves glutamine to supply the large subunit with the substrate ammonia. In Campylobacter jejuni subsp. jejuni serotype O:2 (strain ATCC 700819 / NCTC 11168), this protein is Carbamoyl phosphate synthase small chain.